A 488-amino-acid polypeptide reads, in one-letter code: Tyrosine-protein kinase Srms (488 aa).

In terms of domain architecture, SH3 spans 51 to 112 (PFPQLFLALY…PITHVAKASP (62 aa)). Residues 120–212 (WYFSGVSRTQ…LIQNPLLQPC (93 aa)) form the SH2 domain. Positions 230 to 488 (FALGRKLGEG…KLHAIHRCHP (259 aa)) constitute a Protein kinase domain. Residues 236 to 244 (LGEGYFGEV) and K258 each bind ATP. Residue D350 is the Proton acceptor of the active site. Y380 is modified (phosphotyrosine; by autocatalysis).

The protein belongs to the protein kinase superfamily. Tyr protein kinase family. SRC subfamily. As to quaternary structure, interacts (via the SH2 and SH3 domains) with DOK1. Interacts with KHDRBS1/SAM68 and VIM. Highly expressed in most breast cancers (at protein level).

It localises to the cytoplasm. The enzyme catalyses L-tyrosyl-[protein] + ATP = O-phospho-L-tyrosyl-[protein] + ADP + H(+). Functionally, non-receptor tyrosine-protein kinase which phosphorylates DOK1 on tyrosine residues. Also phosphorylates KHDRBS1/SAM68 and VIM on tyrosine residues. Phosphorylation of KHDRBS1 is EGF-dependent. Phosphorylates OTUB1, promoting deubiquitination of RPTOR. The sequence is that of Tyrosine-protein kinase Srms (SRMS) from Homo sapiens (Human).